The following is an 80-amino-acid chain: RNA-binding protein Hfq (80 aa).

Residues 10–70 enclose the Sm domain; that stretch reads DAFLNQVRKE…ISTISPLRPV (61 aa).

It belongs to the Hfq family. Homohexamer.

In terms of biological role, RNA chaperone that binds small regulatory RNA (sRNAs) and mRNAs to facilitate mRNA translational regulation in response to envelope stress, environmental stress and changes in metabolite concentrations. Also binds with high specificity to tRNAs. This chain is RNA-binding protein Hfq, found in Desulforamulus reducens (strain ATCC BAA-1160 / DSM 100696 / MI-1) (Desulfotomaculum reducens).